A 1423-amino-acid chain; its full sequence is Interphotoreceptor matrix proteoglycan 2 (1423 aa).

An N-terminal signal peptide occupies residues 1 to 27 (MFAFLWKISLCLLVLGVITGDPQAVAA). Over 28–1289 (EEKQAKDASP…EYVSEPLVVG (1262 aa)) the chain is Extracellular. Residue N150 is glycosylated (N-linked (GlcNAc...) asparagine). An SEA 1 domain is found at 245–358 (TEQMIEFSIV…NPTVVYTISD (114 aa)). The tract at residues 265–273 (SDPDTAKYQ) is hyaluronan-binding motif involved in chondroitin sulfate A-binding. N325 and N375 each carry an N-linked (GlcNAc...) asparagine glycan. 3 disordered regions span residues 423–469 (AERP…DSEV), 522–559 (DSSDEFEDTGLSDDFLLPSSPSSHLVPEEPPSTDDYTA), and 577–602 (TKRTVTAEKEVVTQGSPADSSSADSL). Positions 523–532 (SSDEFEDTGL) are enriched in acidic residues. Residues 537 to 546 (LLPSSPSSHL) are compositionally biased toward low complexity. Over residues 577–587 (TKRTVTAEKEV) the composition is skewed to basic and acidic residues. N-linked (GlcNAc...) asparagine glycosylation is present at N676. The interval 886 to 907 (FEVSTDTSTEEQQSLDSSLADR) is disordered. Polar residues predominate over residues 889–902 (STDTSTEEQQSLDS). One can recognise an SEA 2 domain in the interval 1083-1196 (RALVVFFSLR…YSLDVESGEQ (114 aa)). Residues N1128, N1142, and N1160 are each glycosylated (N-linked (GlcNAc...) asparagine). 2 consecutive EGF-like domains span residues 1196–1234 (QADPCKFQACNEFSECLVNRWSGEAECVCNPGYLSIDGL) and 1237–1279 (NSIC…EHCE). 5 disulfides stabilise this stretch: C1200-C1211, C1205-C1222, C1240-C1253, C1247-C1263, and C1265-C1278. Residues 1266 to 1274 (RVGENWWYR) form a hyaluronan-binding motif involved in chondroitin sulfate C-binding region. The chain crosses the membrane as a helical span at residues 1290–1310 (IAIASVAGFLLVASAVIFFLA). Residues 1311–1423 (RTLRDQYTKS…FVRQHQMKLL (113 aa)) lie on the Cytoplasmic side of the membrane. The tract at residues 1322–1327 (TEDSQG) is hyaluronan-binding motif involved in chondroitin sulfate C-binding.

Highly glycosylated (N- and O-linked carbohydrates). Expressed in retina.

It localises to the photoreceptor outer segment membrane. Its subcellular location is the photoreceptor inner segment membrane. It is found in the secreted. The protein resides in the extracellular space. The protein localises to the extracellular matrix. It localises to the interphotoreceptor matrix. Functionally, chondroitin sulfate- and hyaluronan-binding proteoglycan involved in the organization of interphotoreceptor matrix. The sequence is that of Interphotoreceptor matrix proteoglycan 2 (IMPG2) from Gallus gallus (Chicken).